The primary structure comprises 143 residues: 3-hydroxyacyl-[acyl-carrier-protein] dehydratase FabZ (143 aa).

Residue His-49 is part of the active site.

Belongs to the thioester dehydratase family. FabZ subfamily.

The protein resides in the cytoplasm. The catalysed reaction is a (3R)-hydroxyacyl-[ACP] = a (2E)-enoyl-[ACP] + H2O. Its function is as follows. Involved in unsaturated fatty acids biosynthesis. Catalyzes the dehydration of short chain beta-hydroxyacyl-ACPs and long chain saturated and unsaturated beta-hydroxyacyl-ACPs. The sequence is that of 3-hydroxyacyl-[acyl-carrier-protein] dehydratase FabZ from Wolbachia sp. subsp. Drosophila simulans (strain wRi).